The sequence spans 350 residues: Probable dual-specificity RNA methyltransferase RlmN (350 aa).

The active-site Proton acceptor is the Glu-91. The 231-residue stretch at 97–327 (YHHGNSVCIS…VTIRREMGRD (231 aa)) folds into the Radical SAM core domain. Cys-104 and Cys-332 form a disulfide bridge. Cys-111, Cys-115, and Cys-118 together coordinate [4Fe-4S] cluster. S-adenosyl-L-methionine-binding positions include 158–159 (GE), Ser-190, 213–215 (SLH), and Asn-289. Catalysis depends on Cys-332, which acts as the S-methylcysteine intermediate.

Belongs to the radical SAM superfamily. RlmN family. [4Fe-4S] cluster serves as cofactor.

The protein localises to the cytoplasm. The catalysed reaction is adenosine(2503) in 23S rRNA + 2 reduced [2Fe-2S]-[ferredoxin] + 2 S-adenosyl-L-methionine = 2-methyladenosine(2503) in 23S rRNA + 5'-deoxyadenosine + L-methionine + 2 oxidized [2Fe-2S]-[ferredoxin] + S-adenosyl-L-homocysteine. It catalyses the reaction adenosine(37) in tRNA + 2 reduced [2Fe-2S]-[ferredoxin] + 2 S-adenosyl-L-methionine = 2-methyladenosine(37) in tRNA + 5'-deoxyadenosine + L-methionine + 2 oxidized [2Fe-2S]-[ferredoxin] + S-adenosyl-L-homocysteine. Functionally, specifically methylates position 2 of adenine 2503 in 23S rRNA and position 2 of adenine 37 in tRNAs. This chain is Probable dual-specificity RNA methyltransferase RlmN, found in Lachnospira eligens (strain ATCC 27750 / DSM 3376 / VPI C15-48 / C15-B4) (Eubacterium eligens).